The following is a 218-amino-acid chain: MSVQTYLVAYNVLQILGWSAILVKTVLGLANGLTWPQLYESVEFELKIFQTAAILEVIHAIVGLVRSPVGTTAMQVTSRVVLVWPILHLCSTARFSIGVPLLLVAWSVTEVIRYSFYALSVLKQPIPYFLLYLRYTLFYVLYPMGVSGELLTLFASLNEVDEKKILTLEMPNRLNMGISFWWVLIIAALSYIPGFPQLYFYMIGQRKKILGGGSKKKQ.

5 helical membrane passes run 15 to 35, 44 to 64, 86 to 106, 137 to 157, and 176 to 196; these read ILGW…GLTW, FELK…IVGL, ILHL…LVAW, LFYV…FASL, and MGIS…PGFP. Catalysis depends on residues Y142 and E149.

The protein belongs to the very long-chain fatty acids dehydratase HACD family.

Its subcellular location is the membrane. It catalyses the reaction a very-long-chain (3R)-3-hydroxyacyl-CoA = a very-long-chain (2E)-enoyl-CoA + H2O. The protein operates within lipid metabolism; fatty acid biosynthesis. In terms of biological role, catalyzes the third of the four reactions of the long-chain fatty acids elongation cycle. This endoplasmic reticulum-bound enzymatic process, allows the addition of two carbons to the chain of long- and very long-chain fatty acids/VLCFAs per cycle. This enzyme catalyzes the dehydration of the 3-hydroxyacyl-CoA intermediate into trans-2,3-enoyl-CoA, within each cycle of fatty acid elongation. Thereby, it participates in the production of VLCFAs of different chain lengths that are involved in multiple biological processes as precursors of membrane lipids and lipid mediators. This is Very-long-chain (3R)-3-hydroxyacyl-CoA dehydratase hpo-8 (hpo-8) from Caenorhabditis elegans.